A 103-amino-acid chain; its full sequence is Putative inactive recombination-promoting nuclease-like protein YjiP (103 aa).

Belongs to the Rpn/YhgA-like nuclease family.

Its function is as follows. This pseudogene is the N-terminal fragment of low activity DNA endonuclease RpnD which probably yields 3'-hydroxyl ends. The intact protein can be seen in this entry (AC B7NGZ6). Expression of the repaired protein increases the frequency of recA-independent recombination, but also decreases viability probably via DNA damage; in a RecA strain expression has no effect on viability but does induce the SOS repair response. May play a role in horizontal gene transfer. This Escherichia coli (strain K12) protein is Putative inactive recombination-promoting nuclease-like protein YjiP (yjiP).